A 67-amino-acid polypeptide reads, in one-letter code: Conotoxin Cl14c (67 aa).

Positions 1–20 (MNVTVMFLVLLLLTMPLTDG) are cleaved as a signal peptide. Residues 21-48 (FNIRATNGGELFGPVQRDAGNVLDHGFQ) constitute a propeptide that is removed on maturation.

Belongs to the conotoxin L superfamily. Contains 2 disulfide bonds. In terms of tissue distribution, expressed by the venom duct.

It localises to the secreted. The polypeptide is Conotoxin Cl14c (Californiconus californicus (California cone)).